We begin with the raw amino-acid sequence, 714 residues long: Polyribonucleotide nucleotidyltransferase (714 aa).

The Mg(2+) site is built by aspartate 484 and aspartate 490. The KH domain occupies 551–610 (PRIMVINIAPEKVREVIGPGGKVINKIIDETGVKIDTEDDGKITVAGENTESAQRAIDMI). Residues 620 to 688 (GEKYLGRVTK…DQGKMTLSRK (69 aa)) form the S1 motif domain. The segment at 685-714 (LSRKALLPKPERKEKKNFDKKSEDQNSEDK) is disordered. Basic and acidic residues predominate over residues 693–714 (KPERKEKKNFDKKSEDQNSEDK).

This sequence belongs to the polyribonucleotide nucleotidyltransferase family. Mg(2+) serves as cofactor.

Its subcellular location is the cytoplasm. The enzyme catalyses RNA(n+1) + phosphate = RNA(n) + a ribonucleoside 5'-diphosphate. Involved in mRNA degradation. Catalyzes the phosphorolysis of single-stranded polyribonucleotides processively in the 3'- to 5'-direction. In Finegoldia magna (strain ATCC 29328 / DSM 20472 / WAL 2508) (Peptostreptococcus magnus), this protein is Polyribonucleotide nucleotidyltransferase.